The primary structure comprises 130 residues: Anti-adapter protein IraD (130 aa).

This sequence belongs to the GpW/Gp25 family. IraD subfamily. Interacts with RssB.

It is found in the cytoplasm. Inhibits RpoS proteolysis by regulating RssB activity, thereby increasing the stability of the sigma stress factor RpoS during oxidative stress. Its effect on RpoS stability is due to its interaction with RssB, which probably blocks the interaction of RssB with RpoS, and the consequent delivery of the RssB-RpoS complex to the ClpXP protein degradation pathway. The protein is Anti-adapter protein IraD of Escherichia coli O139:H28 (strain E24377A / ETEC).